The primary structure comprises 393 residues: tRNA(Met) cytidine acetate ligase (393 aa).

3 residues coordinate ATP: glycine 81, asparagine 142, and arginine 167.

It belongs to the TmcAL family.

Its subcellular location is the cytoplasm. The enzyme catalyses cytidine(34) in elongator tRNA(Met) + acetate + ATP = N(4)-acetylcytidine(34) in elongator tRNA(Met) + AMP + diphosphate. Its function is as follows. Catalyzes the formation of N(4)-acetylcytidine (ac(4)C) at the wobble position of elongator tRNA(Met), using acetate and ATP as substrates. First activates an acetate ion to form acetyladenylate (Ac-AMP) and then transfers the acetyl group to tRNA to form ac(4)C34. This chain is tRNA(Met) cytidine acetate ligase, found in Bacillus cereus (strain AH187).